The chain runs to 907 residues: Probable dipeptidyl-aminopeptidase B (907 aa).

The span at methionine 1–aspartate 11 shows a compositional bias: basic and acidic residues. The tract at residues methionine 1 to leucine 71 is disordered. Residues methionine 1–arginine 88 lie on the Cytoplasmic side of the membrane. Positions serine 22–serine 36 are enriched in low complexity. A helical; Signal-anchor for type II membrane protein membrane pass occupies residues alanine 89 to valine 109. Over serine 110–valine 907 the chain is Vacuolar. Residues asparagine 185 and asparagine 341 are each glycosylated (N-linked (GlcNAc...) asparagine). Serine 746 (charge relay system) is an active-site residue. An N-linked (GlcNAc...) asparagine glycan is attached at asparagine 800. Residues aspartate 823 and histidine 856 each act as charge relay system in the active site.

It belongs to the peptidase S9B family.

It is found in the vacuole membrane. It catalyses the reaction Release of an N-terminal dipeptide, Xaa-Yaa-|-Zaa-, from a polypeptide, preferentially when Yaa is Pro, provided Zaa is neither Pro nor hydroxyproline.. Type IV dipeptidyl-peptidase which removes N-terminal dipeptides sequentially from polypeptides having unsubstituted N-termini provided that the penultimate residue is proline. The sequence is that of Probable dipeptidyl-aminopeptidase B (DAPB) from Tuber melanosporum (strain Mel28) (Perigord black truffle).